The primary structure comprises 1066 residues: Vinculin (1066 aa).

An N-terminal globular head region spans residues 1-835 (MPVFHTRTIE…GAVAKVREAF (835 aa)). Residue S97 is modified to Phosphoserine. The interval 168-208 (MTKMAKMIDERQQELTHQEHRVMLVNSMNTVKELLPVLISA) is talin-interaction. Residue K173 is modified to N6-acetyllysine. 3 repeat units span residues 259-369 (ASKD…KVEN), 370-479 (AARK…KTNR), and 480-589 (AVAN…QMQE). The 3 X 112 AA tandem repeats stretch occupies residues 259–589 (ASKDTEAMKR…LKDLKTQMQE (331 aa)). A phosphoserine mark is found at S260, S272, S275, S290, S346, and S434. K496 carries the post-translational modification N6-acetyllysine. Y537 carries the post-translational modification Phosphotyrosine. Phosphoserine occurs at positions 574, 579, and 600. Phosphothreonine occurs at positions 604 and 672. The residue at position 721 (S721) is a Phosphoserine. Residues 741–764 (MANIQPQMLVAGATSIARRANRIL) are interaction with ACTN4. Phosphoserine occurs at positions 795 and 809. Residue Y822 is modified to Phosphotyrosine. Positions 836 to 878 (QPQEPDFPPPPPDLEQLRLTDELAPPKPPLPEGEVPPPRPPPP) are linker (Pro-rich). The tract at residues 857–887 (ELAPPKPPLPEGEVPPPRPPPPEEKDEEFPE) is disordered. Pro residues predominate over residues 860–876 (PPKPPLPEGEVPPPRPP). The segment at 879-1066 (EEKDEEFPEQ…RWVRKTPWYQ (188 aa)) is C-terminal tail. Facilitates phospholipid membrane insertion stretches follow at residues 935–978 (RLVR…KRIR) and 1052–1066 (AGFT…PWYQ). Phosphotyrosine; by SRC-type Tyr-kinases is present on Y1065.

This sequence belongs to the vinculin/alpha-catenin family. As to quaternary structure, exhibits self-association properties. Part of a complex composed of THSD1, PTK2/FAK1, TLN1 and VCL. Interacts with APBB1IP, NRAP and TLN1. Interacts with CTNNB1 and this interaction is necessary for its localization to the cell-cell junctions and for its function in regulating cell surface expression of E-cadherin. Interacts with SORBS1. Interacts with SYNM. Interacts with CTNNA1. Binds to ACTN4; this interaction triggers conformational changes. Interacts with FLII. Post-translationally, phosphorylated; on serines, threonines and tyrosines. Phosphorylation on Tyr-1065 in activated platelets affects head-tail interactions and cell spreading but has no effect on actin binding nor on localization to focal adhesion plaques. In terms of processing, acetylated; mainly by myristic acid but also by a small amount of palmitic acid.

Its subcellular location is the cell membrane. It localises to the cell junction. The protein localises to the adherens junction. The protein resides in the focal adhesion. It is found in the cytoplasm. Its subcellular location is the cytoskeleton. It localises to the sarcolemma. The protein localises to the cell projection. The protein resides in the podosome. Functionally, actin filament (F-actin)-binding protein involved in cell-matrix adhesion and cell-cell adhesion. Regulates cell-surface E-cadherin expression and potentiates mechanosensing by the E-cadherin complex. May also play important roles in cell morphology and locomotion. The protein is Vinculin of Rattus norvegicus (Rat).